We begin with the raw amino-acid sequence, 430 residues long: Asparagine--tRNA ligase (430 aa).

This sequence belongs to the class-II aminoacyl-tRNA synthetase family. In terms of assembly, homodimer.

It is found in the cytoplasm. The catalysed reaction is tRNA(Asn) + L-asparagine + ATP = L-asparaginyl-tRNA(Asn) + AMP + diphosphate + H(+). This is Asparagine--tRNA ligase from Oceanobacillus iheyensis (strain DSM 14371 / CIP 107618 / JCM 11309 / KCTC 3954 / HTE831).